Reading from the N-terminus, the 935-residue chain is uncharacterized protein (935 aa).

9 disordered regions span residues 1–32 (MDIGLITNKEDDEENDLSIKSPYSTTKNQNNN), 74–228 (NNNN…YNNG), 265–287 (NNENKKKNNDNENNNYPNFNNNN), 342–376 (NQQKHQKKIQHQENSNFEQLEKPEQLSHNSESSKT), 394–414 (SPTQQQQQQQQQQQQQQQQQY), 466–491 (KNINNNNSNNNNNNNNNNNNNNNNNI), 516–559 (PHQQ…TSTI), 727–755 (SPSSSTSSETTTSTSTTTNNTSTTTISPS), and 778–799 (GGGSSGGGGSGGGVNNNNNVQN). A compositionally biased stretch (low complexity) spans 74-227 (NNNNNTTNNN…NNNDDNIYNN (154 aa)). A coiled-coil region spans residues 262–331 (KKNNNENKKK…NNINNNNNKI (70 aa)). Basic and acidic residues predominate over residues 265 to 274 (NNENKKKNND). Low complexity predominate over residues 275-287 (NENNNYPNFNNNN). The segment covering 367 to 376 (LSHNSESSKT) has biased composition (polar residues). The span at 397-414 (QQQQQQQQQQQQQQQQQY) shows a compositional bias: low complexity. Positions 522 to 559 (SSPTSSSTSTSSTTSSSSSSSSSSSSSSSSSTSSTSTI) are enriched in low complexity. Residues 778-791 (GGGSSGGGGSGGGV) are compositionally biased toward gly residues.

This is an uncharacterized protein from Dictyostelium discoideum (Social amoeba).